A 368-amino-acid polypeptide reads, in one-letter code: MRPEFSAELSELDSTLTTIEKVLNPQEMSDRVRELEAQAADPSLWDDPDHAQQVTSELSHVQAELRKITDLRQRIEDLPIMVELAEEEDGDTSIAEEELADLRSLIDALEVKTMLSGEYDAREAVINIRSGAGGVDAADWAEMLMRMYTRWAEKNGHKVDIYDISYAEEAGIKSATFVVHGDYMYGQLSVEQGAHRLVRISPFDNQGRRQTSFAEVEVLPVVEKVDSIDIPDADVRVDVYRSSGPGGQSVNTTDSAVRLTHIPTGIVVTCQNEKSQIQNKASAMRVLQAKLLERKRQEERAEMDALGAGGNASWGNQMRSYVLHPYQMVKDLRTNFEVNDPQKVLDGDIDGLLEAGIRWRMAESQSAE.

Glutamine 248 is subject to N5-methylglutamine.

This sequence belongs to the prokaryotic/mitochondrial release factor family. In terms of processing, methylated by PrmC. Methylation increases the termination efficiency of RF2.

Its subcellular location is the cytoplasm. Peptide chain release factor 2 directs the termination of translation in response to the peptide chain termination codons UGA and UAA. This chain is Peptide chain release factor 2, found in Corynebacterium glutamicum (strain R).